Here is a 922-residue protein sequence, read N- to C-terminus: Band 3 anion transport protein (922 aa).

Disordered regions lie at residues 1–36 (MEGP…TMSN) and 355–389 (QHPD…LRTR). The Cytoplasmic portion of the chain corresponds to 1 to 416 (MEGPGQDTED…LSDIRDALNP (416 aa)). Basic and acidic residues predominate over residues 10–26 (DALRRSLDPEGYEDTKG). Residues 27–36 (SRTSLGTMSN) are compositionally biased toward polar residues. The chain crosses the membrane as a helical span at residues 417 to 440 (QCLAAVIFIYFAALSPAITFGGLL). Residues 441-448 (GEKTRGMM) are Extracellular-facing. The helical transmembrane segment at 449 to 469 (GVSELLLSTSVQCLLFSLLSA) threads the bilayer. Residues 470-472 (QPL) lie on the Cytoplasmic side of the membrane. Residues 473-489 (LVVGFSGPLLVFEEAFF) form a discontinuously helical membrane-spanning segment. At 490–498 (RFCEDHGLE) the chain is on the extracellular side. A helical membrane pass occupies residues 499-519 (YIVGRVWIGFWLILLVLLVVA). Residues 520-531 (CEGTVLVRYLSR) lie on the Cytoplasmic side of the membrane. A helical membrane pass occupies residues 532-554 (YTQEIFSFLISLIFIYETFAKLV). The Extracellular portion of the chain corresponds to 555-581 (TIFEAHPLQQSYDTDVSTEPSVPKPNT). The chain crosses the membrane as a helical span at residues 582–602 (ALLSLVLMAGTFFLALFLRQF). Residues 603 to 613 (KNSVFLPGKVR) are Cytoplasmic-facing. The helical transmembrane segment at 614 to 634 (RLIGDFGVPISIFVMALADFF) threads the bilayer. Residues 635 to 674 (IKDTYTQKLKVPRGLEVTNGTARGWFIHPMGSATPFPIWM) are Extracellular-facing. N653 is a glycosylation site (N-linked (GlcNAc...) asparagine). The helical transmembrane segment at 675–695 (MFASPVPALLVFILIFLETQI) threads the bilayer. Topologically, residues 696 to 711 (TTLIVSKPERKLVKGS) are cytoplasmic. Residues 712 to 730 (GFHLDLLLIVAMGGLAALF) traverse the membrane as a helical segment. Residues 731-748 (GMPWLSATTVRTITHANA) traverse the membrane as a discontinuously helical segment. Residues 749–771 (LTVVGKSAVPGERAHIVEVKEQR) are Cytoplasmic-facing. 2 helical membrane-spanning segments follow: residues 772 to 792 (LSGL…PILK) and 793 to 811 (YIPL…VTSL). Residues 812-849 (FGIQLFDRILLLLMPPKYHPKEPYVTRVKTWRITSSPL) lie on the Cytoplasmic side of the membrane. An intramembrane region (discontinuously helical) is located at residues 850–880 (TQILVVALLWGVKVSPASLRCPFVLVLTVPL). Topologically, residues 881–922 (RRLLLPRIFSEIELKCLDTDDAVVTFEEAEGQDVYNEVQMPS) are cytoplasmic.

Belongs to the anion exchanger (TC 2.A.31) family. A dimer in solution, it spans the membrane asymmetrically and appears to be tetrameric. In terms of tissue distribution, erythrocytes.

Its subcellular location is the cell membrane. It localises to the basolateral cell membrane. The enzyme catalyses hydrogencarbonate(in) + chloride(out) = hydrogencarbonate(out) + chloride(in). Functions both as a transporter that mediates electroneutral anion exchange across the cell membrane and as a structural protein. Major integral membrane glycoprotein of the erythrocyte membrane; required for normal flexibility and stability of the erythrocyte membrane and for normal erythrocyte shape via the interactions of its cytoplasmic domain with cytoskeletal proteins, glycolytic enzymes, and hemoglobin. Functions as a transporter that mediates the 1:1 exchange of inorganic anions across the erythrocyte membrane. Mediates chloride-bicarbonate exchange in the kidney, and is required for normal acidification of the urine. This is Band 3 anion transport protein (SLC4A1) from Gallus gallus (Chicken).